We begin with the raw amino-acid sequence, 277 residues long: Release factor glutamine methyltransferase (277 aa).

Residues 117–121 (GTGTG), Asp140, Trp168, and Asn183 contribute to the S-adenosyl-L-methionine site. 183–186 (NPPY) is a binding site for substrate.

The protein belongs to the protein N5-glutamine methyltransferase family. PrmC subfamily.

It carries out the reaction L-glutaminyl-[peptide chain release factor] + S-adenosyl-L-methionine = N(5)-methyl-L-glutaminyl-[peptide chain release factor] + S-adenosyl-L-homocysteine + H(+). Functionally, methylates the class 1 translation termination release factors RF1/PrfA and RF2/PrfB on the glutamine residue of the universally conserved GGQ motif. The protein is Release factor glutamine methyltransferase of Shigella flexneri.